Consider the following 356-residue polypeptide: tRNA N6-adenosine threonylcarbamoyltransferase (356 aa).

The Fe cation site is built by His-115 and His-119. Residues 138-142, Asp-171, Gly-184, and Asn-283 each bind substrate; that span reads LVSGG. A Fe cation-binding site is contributed by Asp-311.

The protein belongs to the KAE1 / TsaD family. Fe(2+) serves as cofactor.

The protein resides in the cytoplasm. The catalysed reaction is L-threonylcarbamoyladenylate + adenosine(37) in tRNA = N(6)-L-threonylcarbamoyladenosine(37) in tRNA + AMP + H(+). In terms of biological role, required for the formation of a threonylcarbamoyl group on adenosine at position 37 (t(6)A37) in tRNAs that read codons beginning with adenine. Is involved in the transfer of the threonylcarbamoyl moiety of threonylcarbamoyl-AMP (TC-AMP) to the N6 group of A37, together with TsaE and TsaB. TsaD likely plays a direct catalytic role in this reaction. The sequence is that of tRNA N6-adenosine threonylcarbamoyltransferase from Synechococcus sp. (strain WH7803).